The primary structure comprises 130 residues: Small ribosomal subunit protein uS8 (130 aa).

It belongs to the universal ribosomal protein uS8 family. As to quaternary structure, part of the 30S ribosomal subunit. Contacts proteins S5 and S12.

Its function is as follows. One of the primary rRNA binding proteins, it binds directly to 16S rRNA central domain where it helps coordinate assembly of the platform of the 30S subunit. This chain is Small ribosomal subunit protein uS8, found in Alcanivorax borkumensis (strain ATCC 700651 / DSM 11573 / NCIMB 13689 / SK2).